A 265-amino-acid polypeptide reads, in one-letter code: Homeobox protein CDX-1 (265 aa).

Residues 9–152 (KDSPVYPGPA…GGGGVSGKTR (144 aa)) form a disordered region. Positions 30–43 (YGPPAPPPAPPQYP) are enriched in pro residues. Residues 73-92 (AAAYGPGPAAPAASPASLAF) are compositionally biased toward low complexity. Over residues 93 to 108 (GPPPDFSPVPAPPGPG) the composition is skewed to pro residues. The span at 110–126 (GLLAQPLGGPGTPSSPG) shows a compositional bias: low complexity. The segment at residues 154 to 213 (KDKYRVVYTDHQRLELEKEFHYSRYITIRRKSELAANLGLTERQVKIWFQNRRAKERKVN) is a DNA-binding region (homeobox). Positions 157 to 178 (YRVVYTDHQRLELEKEFHYSRY) are interaction with DNA. Residues 196–207 (RQVKIWFQNRRA) form an interaction with 5-mCpG DNA region. Residues 206–217 (RAKERKVNKKKQ) show a composition bias toward basic residues. Residues 206 to 265 (RAKERKVNKKKQQQQQPPQPPTAHDITATPARPSLGGLCPSNTSLLATSSPMPVKEEFLP) form a disordered region. Residues 245 to 256 (PSNTSLLATSSP) show a composition bias toward polar residues.

The protein belongs to the Caudal homeobox family.

The protein resides in the nucleus. Functionally, plays a role in transcriptional regulation. Involved in activated KRAS-mediated transcriptional activation of PRKD1 in colorectal cancer (CRC) cells. Binds to the PRKD1 promoter in colorectal cancer (CRC) cells. Could play a role in the terminal differentiation of the intestine. Binds preferentially to methylated DNA. The polypeptide is Homeobox protein CDX-1 (CDX1) (Pongo pygmaeus (Bornean orangutan)).